The chain runs to 867 residues: Protein translocase subunit SecA (867 aa).

ATP-binding positions include Gln86, 104–108, and Asp499; that span reads GEGKT. Zn(2+)-binding residues include Cys848, Cys850, Cys859, and His860.

It belongs to the SecA family. As to quaternary structure, monomer and homodimer. Part of the essential Sec protein translocation apparatus which comprises SecA, SecYEG and auxiliary proteins SecDF-YajC and YidC. Zn(2+) is required as a cofactor.

It localises to the cell membrane. Its subcellular location is the cytoplasm. It catalyses the reaction ATP + H2O + cellular proteinSide 1 = ADP + phosphate + cellular proteinSide 2.. Its function is as follows. Part of the Sec protein translocase complex. Interacts with the SecYEG preprotein conducting channel. Has a central role in coupling the hydrolysis of ATP to the transfer of proteins into and across the cell membrane, serving both as a receptor for the preprotein-SecB complex and as an ATP-driven molecular motor driving the stepwise translocation of polypeptide chains across the membrane. The chain is Protein translocase subunit SecA from Wolbachia sp. subsp. Brugia malayi (strain TRS).